Consider the following 231-residue polypeptide: NADH-ubiquinone oxidoreductase chain 4 (231 aa).

Helical transmembrane passes span Pro-1–Ile-21, Met-34–Leu-54, Ile-63–Gly-85, Gly-89–Tyr-111, Ile-118–Leu-138, and Leu-156–Ser-176.

Belongs to the complex I subunit 4 family.

It localises to the mitochondrion membrane. The enzyme catalyses a ubiquinone + NADH + 5 H(+)(in) = a ubiquinol + NAD(+) + 4 H(+)(out). Its function is as follows. Core subunit of the mitochondrial membrane respiratory chain NADH dehydrogenase (Complex I) that is believed to belong to the minimal assembly required for catalysis. Complex I functions in the transfer of electrons from NADH to the respiratory chain. The immediate electron acceptor for the enzyme is believed to be ubiquinone. This is NADH-ubiquinone oxidoreductase chain 4 (MT-ND4) from Calloselasma rhodostoma (Malayan pit viper).